The sequence spans 1262 residues: Zinc finger protein 592 (1262 aa).

Residues 23-45 (SLDAKEAIQAPSEENESPLKSSG) form a disordered region. A phosphoserine mark is found at Ser78, Ser142, Ser145, and Ser146. Disordered stretches follow at residues 122-174 (SFTS…PPPG), 200-278 (KKEP…AHSK), and 294-494 (VANV…ASTP). Glycyl lysine isopeptide (Lys-Gly) (interchain with G-Cter in SUMO2) cross-links involve residues Lys200 and Lys204. Basic and acidic residues-rich tracts occupy residues 213 to 232 (QQEHEQGGQKVVEPHKDLDS) and 298 to 308 (TKEDQPGHTKD). Over residues 343 to 367 (PSDSPRSICSDSSSKGSPSVAASSP) the composition is skewed to low complexity. Residues 454–463 (IKTSDSSSPC) show a composition bias toward polar residues. Over residues 484-494 (QQSTAPQASTP) the composition is skewed to low complexity. Ser529 carries the phosphoserine modification. A Glycyl lysine isopeptide (Lys-Gly) (interchain with G-Cter in SUMO2) cross-link involves residue Lys546. Ser573 carries the post-translational modification Phosphoserine. The segment at 587 to 612 (YCCLECGDAFALEKSLSQHYSRRSVH) adopts a C2H2-type 1; atypical zinc-finger fold. The segment at 615-639 (VLCTLCSKTLLFFNKCSLLRHARDH) adopts a C2H2-type 2; atypical zinc-finger fold. A Phosphoserine modification is found at Ser691. The C2H2-type 3; degenerate zinc-finger motif lies at 711 to 731 (TKCPECHKQMRDYMVLATHFQ). Residues 740–764 (LTCQVCQMLLPNQCSFCAHQRIHAH) form a C2H2-type 4 zinc finger. The segment at 768–790 (YCCPECGVLCRSAYFQTHVKENC) adopts a C2H2-type 5; atypical zinc-finger fold. 3 C2H2-type zinc fingers span residues 799 to 822 (YRCIHCGVIHLTLALLKSHIQERH), 827 to 850 (HKCAFCPMAFKTASSTMDHSTTQH), and 892 to 915 (FKCPECPLLFLQKPELMQHVKNTH). A compositionally biased stretch (low complexity) spans 924-935 (LSSLQSSTDTSS). A disordered region spans residues 924-979 (LSSLQSSTDTSSNRPGSRAPAEPPATNVAARGSSLTAGRWGRPEAHRRAEARPRMR). A compositionally biased stretch (basic and acidic residues) spans 964-976 (GRPEAHRRAEARP). 2 C2H2-type zinc fingers span residues 983 to 1006 (WTCQECQEWVPDRESYVSHMKKSH) and 1013 to 1036 (YPCRQCEQSFHNPSSLRKHIRNNH). The C2H2-type 11; atypical zinc finger occupies 1043 to 1069 (YTCGYCTEDSPSFPRPSLLESHISLMH). Ser1089 carries the post-translational modification Phosphoserine. The C2H2-type 12; atypical zinc-finger motif lies at 1124-1146 (FQCAKCTFATDSELEFQSHIPQH). The C2H2-type 13 zinc finger occupies 1153–1176 (AQCLLCGLCYTSTSSLNRHLFIVH). Residues Ser1198 and Ser1202 each carry the phosphoserine modification. The segment at 1222–1262 (PLVTDLGGQQGLALDEDSAQDPQNQPQASQDQNSHALSPQV) is disordered. The segment covering 1241 to 1262 (QDPQNQPQASQDQNSHALSPQV) has biased composition (polar residues).

Belongs to the krueppel C2H2-type zinc-finger protein family. As to quaternary structure, interacts with ZMYND8. In terms of tissue distribution, expressed in the brain.

It is found in the nucleus. May be involved in transcriptional regulation. This chain is Zinc finger protein 592 (Znf592), found in Mus musculus (Mouse).